The chain runs to 951 residues: Leucine-rich repeat-containing G-protein coupled receptor 4 (951 aa).

The signal sequence occupies residues 1-24; the sequence is MPGPLRLLCFFALGLLGSAGPSGA. In terms of domain architecture, LRRNT spans 25-57; that stretch reads APPLCAAPCSCDGDRRVDCSGKGLTAVPEGLSA. At 25–544 the chain is on the extracellular side; it reads APPLCAAPCS…LLGSWMIRLT (520 aa). 2 disulfides stabilise this stretch: C29–C35 and C33–C43. 10 LRR repeats span residues 58 to 79, 82 to 103, 106 to 127, 130 to 151, 154 to 177, 178 to 199, 202 to 223, 226 to 247, 249 to 270, and 273 to 294; these read FTQALDISMNNITQLPEDAFKS, FLEELQLAGNDLSFIHPKALSG, ELKVLTLQNNQLRTVPSEAIHG, ALQSLRLDANHITSVPEDSFEG, QLRHLWLDDNSLTEVPVRPLSNLP, TLQALTLALNNISSIPDFAFTN, SLVVLHLHNNKIKSLSQHCFDG, NLETLDLNYNNLDEFPQAIKAL, SLKELGFHSNSISVIPDGAFGG, and LLRTIHLYDNPLSFVGNSAFHN. N-linked (GlcNAc...) asparagine glycosylation is present at N68. N-linked (GlcNAc...) asparagine glycans are attached at residues N188 and N199. N294 and N314 each carry an N-linked (GlcNAc...) asparagine glycan. LRR repeat units follow at residues 320-341, 344-365, 366-387, 390-411, and 414-435; these read HLESLTLTGTKISSIPDDLCQN, MLRTLDLSYNNIRDLPSFNGCR, ALEEISLQRNQISLIKENTFQG, SLRILDLSRNLIREIHSGAFAK, and TITNLDVSFNELTSFPTEGLNG. A disulfide bridge connects residues C339 and C364. Disulfide bonds link C470-C522 and C471-C476. Residue N505 is glycosylated (N-linked (GlcNAc...) asparagine). A helical transmembrane segment spans residues 545–565; sequence VWFIFLVALLFNLLVILTVFA. Residues 566 to 575 lie on the Cytoplasmic side of the membrane; sequence SCSSLPASKL. The chain crosses the membrane as a helical span at residues 576 to 596; it reads FIGLISVSNLLMGIYTGILTF. At 597 to 619 the chain is on the extracellular side; that stretch reads LDAVSWGRFAEFGIWWETGSGCK. C618 and C693 form a disulfide bridge. Residues 620–640 form a helical membrane-spanning segment; the sequence is VAGSLAVFSSESAVFLLTLAA. At 641 to 661 the chain is on the cytoplasmic side; sequence VERSVFAKDLMKHGKSSHLRQ. Residues 662–682 form a helical membrane-spanning segment; sequence FQVAALLALLGAAVAGCFPLF. The Extracellular segment spans residues 683 to 703; that stretch reads HGGQYSASPLCLPFPTGETPS. The chain crosses the membrane as a helical span at residues 704-724; the sequence is LGFTVTLVLLNSLAFLLMAII. Residues 725 to 756 lie on the Cytoplasmic side of the membrane; it reads YTKLYCNLEKEDLSENSQSSVIKHVAWLIFTN. The helical transmembrane segment at 757-777 threads the bilayer; that stretch reads CIFFCPVAFFSFAPLITAISI. At 778-783 the chain is on the extracellular side; that stretch reads SPEIMK. A helical membrane pass occupies residues 784–804; sequence SVTLIFFPLPACLNPVLYVFF. Residues 805–951 are Cytoplasmic-facing; that stretch reads NPKFKEDWKL…YAYNLQRVRD (147 aa). S920 carries the post-translational modification Phosphoserine.

Belongs to the G-protein coupled receptor 1 family.

It is found in the cell membrane. Functionally, receptor for R-spondins that potentiates the canonical Wnt signaling pathway and is involved in the formation of various organs. Upon binding to R-spondins (RSPO1, RSPO2, RSPO3 or RSPO4), associates with phosphorylated LRP6 and frizzled receptors that are activated by extracellular Wnt receptors, triggering the canonical Wnt signaling pathway to increase expression of target genes. In contrast to classical G-protein coupled receptors, does not activate heterotrimeric G-proteins to transduce the signal. Its function as activator of the Wnt signaling pathway is required for the development of various organs, including liver, kidney, intestine, bone, reproductive tract and eye. May also act as a receptor for norrin (NDP), such results however require additional confirmation in vivo. Required during spermatogenesis to activate the Wnt signaling pathway in peritubular myoid cells. Required for the maintenance of intestinal stem cells and Paneth cell differentiation in postnatal intestinal crypts. Acts as a regulator of bone formation and remodeling. Involved in kidney development; required for maintaining the ureteric bud in an undifferentiated state. Involved in the development of the anterior segment of the eye. Required during erythropoiesis. Also acts as a negative regulator of innate immunity by inhibiting TLR2/TLR4 associated pattern-recognition and pro-inflammatory cytokine production. Plays an important role in regulating the circadian rhythms of plasma lipids, partially through regulating the rhythmic expression of MTTP. Required for proper development of GnRH neurons (gonadotropin-releasing hormone expressing neurons) that control the release of reproductive hormones from the pituitary gland. The chain is Leucine-rich repeat-containing G-protein coupled receptor 4 (Lgr4) from Rattus norvegicus (Rat).